Reading from the N-terminus, the 271-residue chain is Thiosulfate sulfurtransferase (271 aa).

Rhodanese domains lie at 21–129 (GAPE…ALDR) and 159–270 (GAAD…TPVE). Catalysis depends on Cys-230, which acts as the Cysteine persulfide intermediate.

It is found in the cytoplasm. It carries out the reaction thiosulfate + hydrogen cyanide = thiocyanate + sulfite + 2 H(+). Catalyzes the sulfur transfer reaction from thiosulfate to cyanide, thus converting cyanide to the less toxic thiocyanate. Contributes to P.aeruginosa survival under cyanogenic conditions, and thus provides the bacterium with a defense mechanism against endogenous cyanide toxicity. Is the main cytoplasmic rhodanese in P.aeruginosa, accounting for 90% of total rhodanese activity. The chain is Thiosulfate sulfurtransferase from Pseudomonas aeruginosa (strain ATCC 15692 / DSM 22644 / CIP 104116 / JCM 14847 / LMG 12228 / 1C / PRS 101 / PAO1).